We begin with the raw amino-acid sequence, 361 residues long: 3-dehydroquinate synthase (361 aa).

NAD(+) is bound by residues 72-77 (SGEKEK), 130-131 (TT), Lys142, and Lys151. Residues Glu184, His247, and His264 each contribute to the Zn(2+) site.

This sequence belongs to the sugar phosphate cyclases superfamily. Dehydroquinate synthase family. It depends on NAD(+) as a cofactor. Co(2+) serves as cofactor. Requires Zn(2+) as cofactor.

Its subcellular location is the cytoplasm. It catalyses the reaction 7-phospho-2-dehydro-3-deoxy-D-arabino-heptonate = 3-dehydroquinate + phosphate. Its pathway is metabolic intermediate biosynthesis; chorismate biosynthesis; chorismate from D-erythrose 4-phosphate and phosphoenolpyruvate: step 2/7. Functionally, catalyzes the conversion of 3-deoxy-D-arabino-heptulosonate 7-phosphate (DAHP) to dehydroquinate (DHQ). The sequence is that of 3-dehydroquinate synthase from Bacillus cereus (strain ATCC 14579 / DSM 31 / CCUG 7414 / JCM 2152 / NBRC 15305 / NCIMB 9373 / NCTC 2599 / NRRL B-3711).